A 1137-amino-acid chain; its full sequence is Eukaryotic translation initiation factor 3 subunit A (1137 aa).

In terms of domain architecture, PCI spans leucine 319–threonine 501. 2 stretches are compositionally biased toward basic and acidic residues: residues glutamine 588–glutamate 623 and alanine 829–aspartate 899. 2 disordered regions span residues glutamine 588–isoleucine 631 and alanine 829–arginine 1137. Serine 908 is modified (phosphoserine). Basic and acidic residues-rich tracts occupy residues arginine 922–serine 971, serine 985–arginine 1046, aspartate 1054–glutamine 1083, and alanine 1106–aspartate 1127.

Belongs to the eIF-3 subunit A family. In terms of assembly, component of the eukaryotic translation initiation factor 3 (eIF-3) complex. The eIF-3 complex interacts with pix.

It localises to the cytoplasm. Its function is as follows. RNA-binding component of the eukaryotic translation initiation factor 3 (eIF-3) complex, which is involved in protein synthesis of a specialized repertoire of mRNAs and, together with other initiation factors, stimulates binding of mRNA and methionyl-tRNAi to the 40S ribosome. The eIF-3 complex specifically targets and initiates translation of a subset of mRNAs involved in cell proliferation. This is Eukaryotic translation initiation factor 3 subunit A from Drosophila yakuba (Fruit fly).